The following is a 478-amino-acid chain: UDP-N-acetylmuramate--L-alanine ligase (478 aa).

An ATP-binding site is contributed by 125–131; it reads GTHGKTT.

The protein belongs to the MurCDEF family.

The protein localises to the cytoplasm. The catalysed reaction is UDP-N-acetyl-alpha-D-muramate + L-alanine + ATP = UDP-N-acetyl-alpha-D-muramoyl-L-alanine + ADP + phosphate + H(+). It functions in the pathway cell wall biogenesis; peptidoglycan biosynthesis. Functionally, cell wall formation. This Dichelobacter nodosus (strain VCS1703A) protein is UDP-N-acetylmuramate--L-alanine ligase.